A 210-amino-acid polypeptide reads, in one-letter code: Probable peroxygenase 7 (210 aa).

Residues 1 to 24 are disordered; sequence MSHQTVALASKAKSPKPKRGKLDK. Residues 25–60 enclose the EF-hand domain; the sequence is EKMTALEKHVSFFDRNKDGTVYPWETYQGFRALGTG. Residue histidine 33 coordinates heme. Positions 38, 40, 42, 44, and 49 each coordinate Ca(2+). The Proline-knot motif lies at 81–90; the sequence is PGKGFSPLFP. The residue at position 188 (serine 188) is a Phosphoserine.

The protein belongs to the caleosin family. In terms of assembly, homodimer. It depends on heme b as a cofactor. Requires Ca(2+) as cofactor. As to expression, expressed in pollen coat.

It is found in the secreted. It catalyses the reaction RH + ROOH = ROH + ROH.. Functionally, probable calcium-binding peroxygenase. May be involved in pollination. The protein is Probable peroxygenase 7 (PXG7) of Arabidopsis thaliana (Mouse-ear cress).